The primary structure comprises 276 residues: MEVRFAMHPSQFKALTTEQIRKEFLIENLFEYGKINMVYTHVDRVIVGSAVPTVEALVLEDGSQIGAQYFLERREIGIINIGSRGYVIADGQKFELDKKDGLYVGMSTKKLEFGSDDPSNPAKFYFVSTPAHKQYPTEKIDIKQTEATHLGSLSESNERTIYKYIHPDGVKSCQLVMGMTILEPNNVWNTMPCHLHDRRMEVYFYFDMPEDAFVLHLMGEPNETRHIIVRNEQAVISPSWSIHSGVGTKNYTFIWAMAGENQSYSDISPVPMKELK.

Zn(2+)-binding residues include His-194, His-196, Glu-201, and His-243.

Belongs to the KduI family. The cofactor is Zn(2+).

The catalysed reaction is 5-dehydro-4-deoxy-D-glucuronate = 3-deoxy-D-glycero-2,5-hexodiulosonate. Its pathway is glycan metabolism; pectin degradation; 2-dehydro-3-deoxy-D-gluconate from pectin: step 4/5. Catalyzes the isomerization of 5-dehydro-4-deoxy-D-glucuronate to 3-deoxy-D-glycero-2,5-hexodiulosonate. The chain is 4-deoxy-L-threo-5-hexosulose-uronate ketol-isomerase from Caldicellulosiruptor bescii (strain ATCC BAA-1888 / DSM 6725 / KCTC 15123 / Z-1320) (Anaerocellum thermophilum).